Consider the following 422-residue polypeptide: Dihydroorotase (422 aa).

The Zn(2+) site is built by histidine 57 and histidine 59. Residues histidine 59–arginine 61 and asparagine 91 contribute to the substrate site. 3 residues coordinate Zn(2+): aspartate 149, histidine 176, and histidine 229. Residue asparagine 275 participates in substrate binding. Aspartate 302 is a binding site for Zn(2+). The active site involves aspartate 302. Residues histidine 306 and phenylalanine 320 to glycine 321 contribute to the substrate site.

It belongs to the metallo-dependent hydrolases superfamily. DHOase family. Class I DHOase subfamily. Zn(2+) serves as cofactor.

The enzyme catalyses (S)-dihydroorotate + H2O = N-carbamoyl-L-aspartate + H(+). It participates in pyrimidine metabolism; UMP biosynthesis via de novo pathway; (S)-dihydroorotate from bicarbonate: step 3/3. Functionally, catalyzes the reversible cyclization of carbamoyl aspartate to dihydroorotate. In Endomicrobium trichonymphae, this protein is Dihydroorotase.